A 79-amino-acid chain; its full sequence is Sulfur carrier protein TusA (79 aa).

C17 functions as the Cysteine persulfide intermediate in the catalytic mechanism.

The protein belongs to the sulfur carrier protein TusA family.

The protein resides in the cytoplasm. Functionally, sulfur carrier protein which probably makes part of a sulfur-relay system. This is Sulfur carrier protein TusA from Idiomarina loihiensis (strain ATCC BAA-735 / DSM 15497 / L2-TR).